We begin with the raw amino-acid sequence, 170 residues long: AP-5 complex subunit sigma-1 (170 aa).

Probably part of the adaptor protein complex 5 (AP-5) a tetramer composed of AP5B1, AP5M1, AP5S1 and AP5Z1. Interacts with ZFYVE26 and SPG11.

It localises to the cytoplasm. Its subcellular location is the cytosol. The protein resides in the late endosome membrane. It is found in the lysosome membrane. In terms of biological role, as part of AP-5, a probable fifth adaptor protein complex it may be involved in endosomal transport. This Mus musculus (Mouse) protein is AP-5 complex subunit sigma-1 (Ap5s1).